We begin with the raw amino-acid sequence, 280 residues long: 2-dehydro-3-deoxyphosphooctonate aldolase (280 aa).

This sequence belongs to the KdsA family.

It is found in the cytoplasm. It carries out the reaction D-arabinose 5-phosphate + phosphoenolpyruvate + H2O = 3-deoxy-alpha-D-manno-2-octulosonate-8-phosphate + phosphate. It functions in the pathway carbohydrate biosynthesis; 3-deoxy-D-manno-octulosonate biosynthesis; 3-deoxy-D-manno-octulosonate from D-ribulose 5-phosphate: step 2/3. It participates in bacterial outer membrane biogenesis; lipopolysaccharide biosynthesis. This is 2-dehydro-3-deoxyphosphooctonate aldolase from Pseudomonas putida (strain W619).